Here is a 389-residue protein sequence, read N- to C-terminus: Succinate--CoA ligase [ADP-forming] subunit beta (389 aa).

The 236-residue stretch at 9-244 (KEIFRSMGVA…LDEEDPKEIE (236 aa)) folds into the ATP-grasp domain. ATP contacts are provided by residues K46, 53-55 (GRG), E99, C102, and E107. Mg(2+)-binding residues include N199 and D213. Substrate-binding positions include N264 and 321–323 (GIM).

It belongs to the succinate/malate CoA ligase beta subunit family. Heterotetramer of two alpha and two beta subunits. The cofactor is Mg(2+).

It carries out the reaction succinate + ATP + CoA = succinyl-CoA + ADP + phosphate. It catalyses the reaction GTP + succinate + CoA = succinyl-CoA + GDP + phosphate. It functions in the pathway carbohydrate metabolism; tricarboxylic acid cycle; succinate from succinyl-CoA (ligase route): step 1/1. Succinyl-CoA synthetase functions in the citric acid cycle (TCA), coupling the hydrolysis of succinyl-CoA to the synthesis of either ATP or GTP and thus represents the only step of substrate-level phosphorylation in the TCA. The beta subunit provides nucleotide specificity of the enzyme and binds the substrate succinate, while the binding sites for coenzyme A and phosphate are found in the alpha subunit. The polypeptide is Succinate--CoA ligase [ADP-forming] subunit beta (Macrococcus caseolyticus (strain JCSC5402) (Macrococcoides caseolyticum)).